A 137-amino-acid polypeptide reads, in one-letter code: Small ribosomal subunit protein uS11 (137 aa).

Disordered stretches follow at residues 1–32 (MPPK…AHIK) and 118–137 (ISDV…RRRV). Residues 12–21 (KTQKSRRRDK) show a composition bias toward basic residues.

This sequence belongs to the universal ribosomal protein uS11 family. Part of the 30S ribosomal subunit. Interacts with proteins S7 and S18. Binds to IF-3.

Functionally, located on the platform of the 30S subunit, it bridges several disparate RNA helices of the 16S rRNA. Forms part of the Shine-Dalgarno cleft in the 70S ribosome. This chain is Small ribosomal subunit protein uS11, found in Nocardia farcinica (strain IFM 10152).